A 303-amino-acid polypeptide reads, in one-letter code: 2-dehydropantoate 2-reductase (303 aa).

Residues 7 to 12 (GCGALG), Asn98, and Ala122 each bind NADP(+). Asn98 contributes to the substrate binding site. Residue Lys176 is the Proton donor of the active site. Substrate is bound by residues Asn180, Asn184, Asn194, and Ser244. Glu256 contacts NADP(+).

This sequence belongs to the ketopantoate reductase family. Monomer.

Its subcellular location is the cytoplasm. The catalysed reaction is (R)-pantoate + NADP(+) = 2-dehydropantoate + NADPH + H(+). It participates in cofactor biosynthesis; (R)-pantothenate biosynthesis; (R)-pantoate from 3-methyl-2-oxobutanoate: step 2/2. Its function is as follows. Catalyzes the NADPH-dependent reduction of ketopantoate into pantoic acid. Has a strong preference for NADPH over NADH as the electron acceptor. Pantoate, ketoisovalerate, oxaloacetate, pyruvate, 3-hydroxypyruvate, alpha-ketoglutarate, alpha-ketobutyrate, and acetaldehyde cannot serve as substrates for reduction. The chain is 2-dehydropantoate 2-reductase from Salmonella typhimurium (strain LT2 / SGSC1412 / ATCC 700720).